Consider the following 405-residue polypeptide: L-carnitine CoA-transferase (405 aa).

CoA is bound by residues Lys97 and Arg104. Asp169 functions as the Nucleophile in the catalytic mechanism.

The protein belongs to the CoA-transferase III family. CaiB subfamily. In terms of assembly, homodimer.

It is found in the cytoplasm. The enzyme catalyses crotonobetainyl-CoA + (R)-carnitine = crotonobetaine + (R)-carnitinyl-CoA. The catalysed reaction is 4-(trimethylamino)butanoyl-CoA + (R)-carnitine = (R)-carnitinyl-CoA + 4-(trimethylamino)butanoate. Its pathway is amine and polyamine metabolism; carnitine metabolism. In terms of biological role, catalyzes the reversible transfer of the CoA moiety from gamma-butyrobetainyl-CoA to L-carnitine to generate L-carnitinyl-CoA and gamma-butyrobetaine. Is also able to catalyze the reversible transfer of the CoA moiety from gamma-butyrobetainyl-CoA or L-carnitinyl-CoA to crotonobetaine to generate crotonobetainyl-CoA. This Salmonella typhi protein is L-carnitine CoA-transferase (caiB).